The following is a 160-amino-acid chain: Photosystem II extrinsic protein V (160 aa).

The N-terminal stretch at 1 to 25 (MKRFILLAIATVFFFCQFQTNPVNA) is a signal peptide. Positions 62, 65, 66, and 117 each coordinate heme c.

This sequence belongs to the cytochrome c family. PsbV subfamily. In terms of assembly, PSII is composed of 1 copy each of membrane proteins PsbA, PsbB, PsbC, PsbD, PsbE, PsbF, PsbH, PsbI, PsbJ, PsbK, PsbL, PsbM, PsbT, PsbX, PsbY, PsbZ, Psb30/Ycf12, peripheral proteins PsbO, CyanoQ (PsbQ), PsbU, PsbV and a large number of cofactors. It forms dimeric complexes. The cofactor is heme c.

It is found in the cellular thylakoid membrane. Functionally, one of the extrinsic, lumenal subunits of photosystem II (PSII). PSII is a light-driven water plastoquinone oxidoreductase, using light energy to abstract electrons from H(2)O, generating a proton gradient subsequently used for ATP formation. The extrinsic proteins stabilize the structure of photosystem II oxygen-evolving complex (OEC), the ion environment of oxygen evolution and protect the OEC against heat-induced inactivation. Low-potential cytochrome c that plays a role in the OEC of PSII. The sequence is that of Photosystem II extrinsic protein V from Rippkaea orientalis (strain PCC 8801 / RF-1) (Cyanothece sp. (strain PCC 8801)).